The sequence spans 226 residues: ATP synthase subunit a (226 aa).

A run of 5 helical transmembrane segments spans residues leucine 20–proline 40, phenylalanine 74–phenylalanine 94, leucine 100–isoleucine 120, leucine 158–glycine 180, and isoleucine 197–leucine 217.

Belongs to the ATPase A chain family. In terms of assembly, F-type ATPases have 2 components, CF(1) - the catalytic core - and CF(0) - the membrane proton channel. CF(1) has five subunits: alpha(3), beta(3), gamma(1), delta(1), epsilon(1). CF(0) has three main subunits: a, b and c.

It is found in the mitochondrion inner membrane. Its function is as follows. Mitochondrial membrane ATP synthase (F(1)F(0) ATP synthase or Complex V) produces ATP from ADP in the presence of a proton gradient across the membrane which is generated by electron transport complexes of the respiratory chain. F-type ATPases consist of two structural domains, F(1) - containing the extramembraneous catalytic core and F(0) - containing the membrane proton channel, linked together by a central stalk and a peripheral stalk. During catalysis, ATP synthesis in the catalytic domain of F(1) is coupled via a rotary mechanism of the central stalk subunits to proton translocation. Key component of the proton channel; it may play a direct role in the translocation of protons across the membrane. The sequence is that of ATP synthase subunit a (ATP6) from Anopheles quadrimaculatus (Common malaria mosquito).